The primary structure comprises 265 residues: Hydroxyethylthiazole kinase (265 aa).

Met-50 serves as a coordination point for substrate. Residues Arg-125 and Thr-171 each coordinate ATP. Substrate is bound at residue Gly-198.

The protein belongs to the Thz kinase family. It depends on Mg(2+) as a cofactor.

The enzyme catalyses 5-(2-hydroxyethyl)-4-methylthiazole + ATP = 4-methyl-5-(2-phosphooxyethyl)-thiazole + ADP + H(+). Its pathway is cofactor biosynthesis; thiamine diphosphate biosynthesis; 4-methyl-5-(2-phosphoethyl)-thiazole from 5-(2-hydroxyethyl)-4-methylthiazole: step 1/1. Functionally, catalyzes the phosphorylation of the hydroxyl group of 4-methyl-5-beta-hydroxyethylthiazole (THZ). This chain is Hydroxyethylthiazole kinase, found in Salmonella choleraesuis (strain SC-B67).